The chain runs to 138 residues: Transcriptional regulator MraZ (138 aa).

SpoVT-AbrB domains follow at residues 3–45 (EFQH…PLAE) and 74–117 (ATEC…AAER).

It belongs to the MraZ family. In terms of assembly, forms oligomers.

It localises to the cytoplasm. Its subcellular location is the nucleoid. This is Transcriptional regulator MraZ from Symbiobacterium thermophilum (strain DSM 24528 / JCM 14929 / IAM 14863 / T).